Consider the following 2242-residue polypeptide: DEP domain-containing protein DDB_G0279099 (2242 aa).

Disordered stretches follow at residues 388 to 465 (SQNT…SNNS), 576 to 644 (DSNA…YSRV), 701 to 730 (PILRNGGTINNNNNNQQNHPISPSNSFDQK), 871 to 965 (DPTT…TKKS), 1077 to 1194 (QLQL…AFNS), 1287 to 1336 (GSQQ…MNGS), 1384 to 1414 (SELLPSSSGASSSSSNTLSSSNSGENNALPE), 1446 to 1471 (AQSSLLNSSTNNANSNNSSNSTNTSG), and 1502 to 1521 (SNNNTYTNNNNNNNSINSLN). Positions 392 to 440 (IQNNNNNNNNNNNNNNNNNNNNNNNNNNNNNNNNNNNNNSNNNKNNQNN) form a coiled coil. A compositionally biased stretch (low complexity) spans 581–614 (GGNNNNNYNNNNGNGNGHNHNNHNNNNNNNNNND). Over residues 622-631 (EPSDFSDTED) the composition is skewed to acidic residues. Polar residues-rich tracts occupy residues 632–642 (NSSTTPNSQYS) and 719–729 (HPISPSNSFDQ). Low complexity predominate over residues 872–955 (PTTTTTTGGT…PNSSNTVPNS (84 aa)). Residues 1066–1101 (IPTVENNQHQQQLQLEQQEKEKEKARLAALEKKKPF) are a coiled coil. Residues 1082–1106 (QQEKEKEKARLAALEKKKPFPREDS) show a composition bias toward basic and acidic residues. 2 stretches are compositionally biased toward low complexity: residues 1108-1182 (STLI…ATTA) and 1287-1299 (GSQQQQQLIGSQS). The span at 1300-1311 (APTSPLTPHKNI) shows a compositional bias: polar residues. Composition is skewed to low complexity over residues 1312-1336 (NTNNNNNNNTTTNTTNNNNSVMNGS), 1384-1410 (SELLPSSSGASSSSSNTLSSSNSGENN), and 1446-1470 (AQSSLLNSSTNNANSNNSSNSTNTS). One can recognise a DEP domain in the interval 1556-1629 (IGIKMTERKY…DGQFYYRLKE (74 aa)). Residues 1645 to 1668 (TNNNFNNNNTNSNNNQQQQQQQQS) show a composition bias toward low complexity. Disordered stretches follow at residues 1645–1763 (TNNN…SMSN), 1803–1910 (DEAN…QQQQ), 2122–2145 (NYNNNNNNNNNNNGGGNGNPNLLK), and 2165–2218 (NSDT…KNEM). A compositionally biased stretch (polar residues) spans 1669–1702 (IPSVTSSAVNSPNKDSNTPDHSPISSPKQIGNKL). 2 stretches are compositionally biased toward low complexity: residues 1703–1760 (SSSS…IQSS) and 1807–1848 (GDNN…SSNS). Residues 1791-1821 (LTNKEKDKEKEIDEANGDNNNNNNNNNNNNN) are a coiled coil. Polar residues-rich tracts occupy residues 1849–1871 (GQGSLNSTLSSIPPATTPNTNPL) and 1879–1889 (YGSSVQNSNQH). Composition is skewed to low complexity over residues 1890–1910 (QQQQPQQPQQQQQQQQQQQQQ) and 2122–2133 (NYNNNNNNNNNN). Composition is skewed to basic and acidic residues over residues 2166–2181 (SDTEEKNNESDSDNNH) and 2192–2218 (DTDHLSESHEGSHKNESDKEGRDKNEM).

It in the N-terminal section; belongs to the IML1 family.

In Dictyostelium discoideum (Social amoeba), this protein is DEP domain-containing protein DDB_G0279099.